A 311-amino-acid chain; its full sequence is Bifunctional protein FolD (311 aa).

Residues 184–186 (GAS), Ile209, and Ile250 contribute to the NADP(+) site.

It belongs to the tetrahydrofolate dehydrogenase/cyclohydrolase family. Homodimer.

It catalyses the reaction (6R)-5,10-methylene-5,6,7,8-tetrahydrofolate + NADP(+) = (6R)-5,10-methenyltetrahydrofolate + NADPH. It carries out the reaction (6R)-5,10-methenyltetrahydrofolate + H2O = (6R)-10-formyltetrahydrofolate + H(+). It functions in the pathway one-carbon metabolism; tetrahydrofolate interconversion. Catalyzes the oxidation of 5,10-methylenetetrahydrofolate to 5,10-methenyltetrahydrofolate and then the hydrolysis of 5,10-methenyltetrahydrofolate to 10-formyltetrahydrofolate. This chain is Bifunctional protein FolD, found in Gluconacetobacter diazotrophicus (strain ATCC 49037 / DSM 5601 / CCUG 37298 / CIP 103539 / LMG 7603 / PAl5).